We begin with the raw amino-acid sequence, 879 residues long: Exocyst complex component 1 (879 aa).

A disordered region spans residues 29 to 94 (SQYSESEYDP…ATSLGNNDGD (66 aa)). Residues 40-52 (ETTHSESDSENHH) are compositionally biased toward basic and acidic residues. Positions 64–76 (FLSQSNDNVSNGP) are enriched in polar residues. A compositionally biased stretch (low complexity) spans 77–91 (SNNTLSSSATSLGNN). Coiled-coil stretches lie at residues 165–187 (YNKQ…NKME) and 226–248 (KGLK…KLKS). Disordered stretches follow at residues 371-413 (QNDF…GKDG) and 455-557 (GQRN…PDAP). Low complexity predominate over residues 373–409 (DFFSSSSSSKKSIDSLNNNTSTSTPSKNSSSSSSSSS). The span at 480–500 (KKSSKKDKKDKKDKKDKKDKK) shows a compositional bias: basic residues. Over residues 519–532 (DSNSPKSPNNAVNG) the composition is skewed to polar residues. Pro residues predominate over residues 541–551 (SPPPPPPPPPK).

It belongs to the SEC3 family. The exocyst complex is composed of sec3/exoc1, sec5/exoc2, sec6/exoc3, sec8/exoc4, sec10/exoc5, sec15/exoc6, exo70/exoc7 and exo84/exoc8.

The protein localises to the midbody. The protein resides in the midbody ring. Component of the exocyst complex involved in the docking of exocytic vesicles with fusion sites on the plasma membrane. The chain is Exocyst complex component 1 (exoc1) from Dictyostelium discoideum (Social amoeba).